A 371-amino-acid polypeptide reads, in one-letter code: Cytochrome b (371 aa).

The next 4 membrane-spanning stretches (helical) occupy residues 25–45 (FGSM…SLSM), 69–90 (WVMQ…YMYI), 105–125 (WLSG…GYVL), and 170–190 (FFAL…IHIM). His75 lines the heme b pocket. The heme b site is built by His174 and His188. Residue His193 participates in a ubiquinone binding. 4 helical membrane-spanning segments follow: residues 218 to 238 (YKDI…VSFF), 280 to 300 (LGGA…PFTH), 312 to 332 (LMQF…WTAT), and 339 to 358 (FTTI…MSNP).

This sequence belongs to the cytochrome b family. In terms of assembly, the cytochrome bc1 complex contains 3 respiratory subunits (MT-CYB, CYC1 and UQCRFS1), 2 core proteins (UQCRC1 and UQCRC2) and probably 6 low-molecular weight proteins. Heme b serves as cofactor.

The protein resides in the mitochondrion inner membrane. Component of the ubiquinol-cytochrome c reductase complex (complex III or cytochrome b-c1 complex) that is part of the mitochondrial respiratory chain. The b-c1 complex mediates electron transfer from ubiquinol to cytochrome c. Contributes to the generation of a proton gradient across the mitochondrial membrane that is then used for ATP synthesis. The polypeptide is Cytochrome b (MT-CYB) (Candoia aspera (New Guinea boa)).